Reading from the N-terminus, the 434-residue chain is Serine hydroxymethyltransferase (434 aa).

120-122 (GHI) lines the (6S)-5,6,7,8-tetrahydrofolate pocket. Lysine 236 is modified (N6-(pyridoxal phosphate)lysine). Glutamate 255 lines the (6S)-5,6,7,8-tetrahydrofolate pocket.

This sequence belongs to the SHMT family. Homodimer. Requires pyridoxal 5'-phosphate as cofactor.

The protein localises to the cytoplasm. It participates in amino-acid biosynthesis; glycine biosynthesis; glycine from L-serine: step 1/1. Its function is as follows. Catalyzes the reversible interconversion of serine and glycine with a modified folate serving as the one-carbon carrier. Also exhibits a pteridine-independent aldolase activity toward beta-hydroxyamino acids, producing glycine and aldehydes, via a retro-aldol mechanism. The sequence is that of Serine hydroxymethyltransferase from Korarchaeum cryptofilum (strain OPF8).